A 476-amino-acid chain; its full sequence is Glutamate--tRNA ligase (476 aa).

Residues 9–19 (PSPTGTLHIGT) carry the 'HIGH' region motif. Residues 248 to 252 (KLSKR) carry the 'KMSKS' region motif. ATP is bound at residue lysine 251.

Belongs to the class-I aminoacyl-tRNA synthetase family. Glutamate--tRNA ligase type 1 subfamily. In terms of assembly, monomer.

Its subcellular location is the cytoplasm. The catalysed reaction is tRNA(Glu) + L-glutamate + ATP = L-glutamyl-tRNA(Glu) + AMP + diphosphate. Catalyzes the attachment of glutamate to tRNA(Glu) in a two-step reaction: glutamate is first activated by ATP to form Glu-AMP and then transferred to the acceptor end of tRNA(Glu). The sequence is that of Glutamate--tRNA ligase from Prochlorococcus marinus (strain MIT 9303).